The following is a 243-amino-acid chain: Small ribosomal subunit protein eS4 (243 aa).

One can recognise an S4 RNA-binding domain in the interval 43-105; it reads IPLLYIVRDY…TGEHYRVLPN (63 aa).

Belongs to the eukaryotic ribosomal protein eS4 family.

This is Small ribosomal subunit protein eS4 (rps4e) from Pyrococcus abyssi (strain GE5 / Orsay).